A 358-amino-acid chain; its full sequence is NADH-quinone oxidoreductase subunit H (358 aa).

8 consecutive transmembrane segments (helical) span residues 30–50 (VVIG…LIYM), 96–116 (FLYN…FSCL), 129–149 (VGVF…LLAG), 168–188 (IISY…LMGT), 201–221 (GWFI…YLIA), 265–285 (FIVA…LHIV), 297–317 (IPGF…LMWI), and 336–356 (YLVP…VFGL).

The protein belongs to the complex I subunit 1 family. In terms of assembly, NDH-1 is composed of 14 different subunits. Subunits NuoA, H, J, K, L, M, N constitute the membrane sector of the complex.

The protein resides in the cell inner membrane. It catalyses the reaction a quinone + NADH + 5 H(+)(in) = a quinol + NAD(+) + 4 H(+)(out). Its function is as follows. NDH-1 shuttles electrons from NADH, via FMN and iron-sulfur (Fe-S) centers, to quinones in the respiratory chain. The immediate electron acceptor for the enzyme in this species is believed to be ubiquinone. Couples the redox reaction to proton translocation (for every two electrons transferred, four hydrogen ions are translocated across the cytoplasmic membrane), and thus conserves the redox energy in a proton gradient. This subunit may bind ubiquinone. The polypeptide is NADH-quinone oxidoreductase subunit H (Bacteroides fragilis (strain ATCC 25285 / DSM 2151 / CCUG 4856 / JCM 11019 / LMG 10263 / NCTC 9343 / Onslow / VPI 2553 / EN-2)).